The following is a 154-amino-acid chain: Cytochrome c-550 (154 aa).

An N-terminal signal peptide occupies residues 1 to 20; the sequence is MKISIYATLAALSLALPAVA. The residue at position 21 (glutamine 21) is a Pyrrolidone carboxylic acid. Positions 35, 38, 39, and 120 each coordinate heme c. Residues 150–154 constitute a propeptide that is removed on maturation; that stretch reads EGAAN.

Post-translationally, binds 1 heme c group covalently per subunit.

This Paracoccus versutus (Thiobacillus versutus) protein is Cytochrome c-550 (cyc).